Reading from the N-terminus, the 565-residue chain is Dihydroxy-acid dehydratase (565 aa).

Asp80 provides a ligand contact to Mg(2+). Residue Cys121 coordinates [2Fe-2S] cluster. The Mg(2+) site is built by Asp122 and Lys123. Lys123 is modified (N6-carboxylysine). Residue Cys194 participates in [2Fe-2S] cluster binding. Glu447 contacts Mg(2+). Catalysis depends on Ser473, which acts as the Proton acceptor.

The protein belongs to the IlvD/Edd family. In terms of assembly, homodimer. Requires [2Fe-2S] cluster as cofactor. It depends on Mg(2+) as a cofactor.

It catalyses the reaction (2R)-2,3-dihydroxy-3-methylbutanoate = 3-methyl-2-oxobutanoate + H2O. It carries out the reaction (2R,3R)-2,3-dihydroxy-3-methylpentanoate = (S)-3-methyl-2-oxopentanoate + H2O. The protein operates within amino-acid biosynthesis; L-isoleucine biosynthesis; L-isoleucine from 2-oxobutanoate: step 3/4. It functions in the pathway amino-acid biosynthesis; L-valine biosynthesis; L-valine from pyruvate: step 3/4. In terms of biological role, functions in the biosynthesis of branched-chain amino acids. Catalyzes the dehydration of (2R,3R)-2,3-dihydroxy-3-methylpentanoate (2,3-dihydroxy-3-methylvalerate) into 2-oxo-3-methylpentanoate (2-oxo-3-methylvalerate) and of (2R)-2,3-dihydroxy-3-methylbutanoate (2,3-dihydroxyisovalerate) into 2-oxo-3-methylbutanoate (2-oxoisovalerate), the penultimate precursor to L-isoleucine and L-valine, respectively. The protein is Dihydroxy-acid dehydratase of Pelodictyon phaeoclathratiforme (strain DSM 5477 / BU-1).